The sequence spans 280 residues: MAPRKGSSRVAKTNSLRRRKLASFLKDFDREVEIRIKQIESDRQNLLKEVDNLYNIEILRLPKALREMNWLDYFALGGNKQALEEAATADLDITEINKLTAEAIQTPLKSAKTRKVIQVDEMIVEEEEEEENERKNLQTARVKRCPPSKKRTQSIQGKGKGKRSSRANTVTPAVGRLEVSMVKPTPGLTPRFDSRVFKTPGLRTPAAGERIYNISGNGSPLADSKEIFLTVPVGGGESLRLLASDLQRHSIAQLDPEALGNIKKLSNRLAQICSSIRTHK.

The segment at Met1–Ile58 is required for interaction with INCENP. The tract at residues Met1–Thr88 is required for centromere localization. The tract at residues Met1–Ala140 is required for interaction with SENP3. Residues Val10–Lys109 form a required to form a minimal CPC core complex that localizes to the central spindle and midbody and properly executes the role of the CPC during cytokinesis region. Positions Lys20 to Gly78 are required for interaction with INCENP and BIRC5. Residues Thr88 and Thr94 each carry the phosphothreonine; by TTK modification. Residue Thr106 is modified to Phosphothreonine. Phosphoserine is present on Ser110. A disordered region spans residues Glu130 to Thr169. A Glycyl lysine isopeptide (Lys-Gly) (interchain with G-Cter in SUMO2) cross-link involves residue Lys135. Residues Arg141–Thr152 are compositionally biased toward basic residues. Ser165 bears the Phosphoserine; by AURKB mark. Phosphothreonine; by TTK is present on Thr169. Phosphothreonine is present on residues Thr189 and Thr204. Phosphoserine is present on residues Ser219 and Ser224. At Thr230 the chain carries Phosphothreonine; by TTK. A phosphoserine mark is found at Ser238 and Ser244.

The protein belongs to the borealin family. May form homooligomers and homodimers. Component of the chromosomal passenger complex (CPC) composed of at least BIRC5/survivin, CDCA8/borealin, INCENP, AURKB or AURKC; in the complex forms a triple-helix bundle-based subcomplex with INCENP and BIRC5. Interacts with SENP3, UBE2I and RANBP2. Interacts (phosphorylated) with SGO1 and SGO2; the association is dependent on CDK1. Phosphorylated by TTK, essentially at Thr-88, Thr94, Thr-169 and Thr-230. Phosphorylation (probably by CDK1) promotes targeting of the CPC to centromeric DNA. In terms of processing, sumoylated by UBE2I and RANBP2. Desumoylated by SENP3 through the removal of SUMO2 and SUMO3.

The protein resides in the nucleus. It localises to the nucleolus. The protein localises to the cytoplasm. Its subcellular location is the chromosome. It is found in the centromere. The protein resides in the cytoskeleton. It localises to the spindle. Functionally, component of the chromosomal passenger complex (CPC), a complex that acts as a key regulator of mitosis. The CPC complex has essential functions at the centromere in ensuring correct chromosome alignment and segregation and is required for chromatin-induced microtubule stabilization and spindle assembly. In the complex, it may be required to direct the CPC to centromeric DNA. In Pongo abelii (Sumatran orangutan), this protein is Borealin (CDCA8).